Consider the following 219-residue polypeptide: MGRRPGRCYRYLSKKAYPKSRFNRGVPDSKIQIFDLGRRKAGVLEFPLLVNCISNERENLSAEALEAARICANKYMVKHAGKDNFHLRIRVYPFHVLRINKMLSCAGADRLQTGMRGSFGKPYGRAARVVFNQPILSIRTKESFRDAAVEALRRAKNKFPGHQKIQVSSKFGFTNMFSDEFNKLNESGRIILRGGSFSVIREKGSIDKFKRDLEYAANN.

This sequence belongs to the universal ribosomal protein uL16 family. As to quaternary structure, component of the small ribosomal subunit. Mature ribosomes consist of a small (40S) and a large (60S) subunit. The 40S subunit contains about 33 different proteins and 1 molecule of RNA (18S). The 60S subunit contains about 49 different proteins and 3 molecules of RNA (25S, 5.8S and 5S).

The chain is Large ribosomal subunit protein uL16 (RPL10) from Encephalitozoon cuniculi (strain GB-M1) (Microsporidian parasite).